Here is a 179-residue protein sequence, read N- to C-terminus: Large ribosomal subunit protein uL5 (179 aa).

It belongs to the universal ribosomal protein uL5 family. In terms of assembly, part of the 50S ribosomal subunit; part of the 5S rRNA/L5/L18/L25 subcomplex. Contacts the 5S rRNA and the P site tRNA. Forms a bridge to the 30S subunit in the 70S ribosome.

Functionally, this is one of the proteins that bind and probably mediate the attachment of the 5S RNA into the large ribosomal subunit, where it forms part of the central protuberance. In the 70S ribosome it contacts protein S13 of the 30S subunit (bridge B1b), connecting the 2 subunits; this bridge is implicated in subunit movement. Contacts the P site tRNA; the 5S rRNA and some of its associated proteins might help stabilize positioning of ribosome-bound tRNAs. This Solidesulfovibrio magneticus (strain ATCC 700980 / DSM 13731 / RS-1) (Desulfovibrio magneticus) protein is Large ribosomal subunit protein uL5.